A 494-amino-acid chain; its full sequence is Bifunctional pantoate ligase/cytidylate kinase (494 aa).

Residues 1–258 (MHFVPTMGGL…CGSTRLIDHA (258 aa)) form a pantoate--beta-alanine ligase region. ATP is bound at residue 7–14 (MGGLHHGH). Residue H14 is the Proton donor of the active site. Q41 lines the (R)-pantoate pocket. Q41 lines the beta-alanine pocket. 130 to 133 (GEKD) is an ATP binding site. Residue Q136 coordinates (R)-pantoate. ATP-binding positions include V159 and 167–170 (SSSR). The cytidylate kinase stretch occupies residues 259–494 (FLMTRSPLVA…VGEEVWPTPV (236 aa)).

This sequence in the N-terminal section; belongs to the pantothenate synthetase family. The protein in the C-terminal section; belongs to the cytidylate kinase family. Type 1 subfamily.

The protein resides in the cytoplasm. The enzyme catalyses (R)-pantoate + beta-alanine + ATP = (R)-pantothenate + AMP + diphosphate + H(+). The catalysed reaction is CMP + ATP = CDP + ADP. It catalyses the reaction dCMP + ATP = dCDP + ADP. Its pathway is cofactor biosynthesis; (R)-pantothenate biosynthesis; (R)-pantothenate from (R)-pantoate and beta-alanine: step 1/1. Its function is as follows. Catalyzes the condensation of pantoate with beta-alanine in an ATP-dependent reaction via a pantoyl-adenylate intermediate. Functionally, catalyzes the transfer of a phosphate group from ATP to either CMP or dCMP to form CDP or dCDP and ADP, respectively. This chain is Bifunctional pantoate ligase/cytidylate kinase, found in Synechococcus sp. (strain CC9311).